The primary structure comprises 321 residues: Lipoyl synthase (321 aa).

C68, C73, C79, C94, C98, C101, and S308 together coordinate [4Fe-4S] cluster. The region spanning 80-297 is the Radical SAM core domain; the sequence is FNHGTATFMI…KVIALELGFT (218 aa).

It belongs to the radical SAM superfamily. Lipoyl synthase family. Requires [4Fe-4S] cluster as cofactor.

It localises to the cytoplasm. It carries out the reaction [[Fe-S] cluster scaffold protein carrying a second [4Fe-4S](2+) cluster] + N(6)-octanoyl-L-lysyl-[protein] + 2 oxidized [2Fe-2S]-[ferredoxin] + 2 S-adenosyl-L-methionine + 4 H(+) = [[Fe-S] cluster scaffold protein] + N(6)-[(R)-dihydrolipoyl]-L-lysyl-[protein] + 4 Fe(3+) + 2 hydrogen sulfide + 2 5'-deoxyadenosine + 2 L-methionine + 2 reduced [2Fe-2S]-[ferredoxin]. It participates in protein modification; protein lipoylation via endogenous pathway; protein N(6)-(lipoyl)lysine from octanoyl-[acyl-carrier-protein]: step 2/2. Its function is as follows. Catalyzes the radical-mediated insertion of two sulfur atoms into the C-6 and C-8 positions of the octanoyl moiety bound to the lipoyl domains of lipoate-dependent enzymes, thereby converting the octanoylated domains into lipoylated derivatives. This chain is Lipoyl synthase, found in Aliivibrio salmonicida (strain LFI1238) (Vibrio salmonicida (strain LFI1238)).